Here is a 205-residue protein sequence, read N- to C-terminus: Guanylate kinase (205 aa).

One can recognise a Guanylate kinase-like domain in the interval 18–196 (PKLFIISAPA…AYQVLRSIFI (179 aa)). Residue 25–32 (APAGAGKT) coordinates ATP.

This sequence belongs to the guanylate kinase family.

It localises to the cytoplasm. It carries out the reaction GMP + ATP = GDP + ADP. Essential for recycling GMP and indirectly, cGMP. The sequence is that of Guanylate kinase (gmk) from Chlamydia trachomatis serovar D (strain ATCC VR-885 / DSM 19411 / UW-3/Cx).